A 352-amino-acid chain; its full sequence is Protein RecA (352 aa).

ATP is bound at residue 67–74 (GPESSGKT).

The protein belongs to the RecA family.

It localises to the cytoplasm. In terms of biological role, can catalyze the hydrolysis of ATP in the presence of single-stranded DNA, the ATP-dependent uptake of single-stranded DNA by duplex DNA, and the ATP-dependent hybridization of homologous single-stranded DNAs. It interacts with LexA causing its activation and leading to its autocatalytic cleavage. In Chlamydia trachomatis serovar A (strain ATCC VR-571B / DSM 19440 / HAR-13), this protein is Protein RecA.